The primary structure comprises 484 residues: RxLR effector protein PexRD18 (484 aa).

An N-terminal signal peptide occupies residues 1-20 (MSHQRILLLLMAAFFAWVSA). Residues 55-79 (RFLRLYDAEVRDTVRGDNDVDREER) carry the RxLR-dEER motif.

It belongs to the RxLR effector family.

The protein resides in the secreted. It is found in the host cell membrane. In terms of biological role, effector that enhances P.infestans colonization of Nicotiana benthamiana leaves. The polypeptide is RxLR effector protein PexRD18 (Phytophthora infestans (strain T30-4) (Potato late blight agent)).